A 206-amino-acid polypeptide reads, in one-letter code: LexA repressor (206 aa).

Residues 28–48 constitute a DNA-binding region (H-T-H motif); it reads RAEIATRLGFKSANAAEEHLK. Catalysis depends on for autocatalytic cleavage activity residues Ser123 and Lys160.

The protein belongs to the peptidase S24 family. In terms of assembly, homodimer.

It catalyses the reaction Hydrolysis of Ala-|-Gly bond in repressor LexA.. Represses a number of genes involved in the response to DNA damage (SOS response), including recA and lexA. In the presence of single-stranded DNA, RecA interacts with LexA causing an autocatalytic cleavage which disrupts the DNA-binding part of LexA, leading to derepression of the SOS regulon and eventually DNA repair. The protein is LexA repressor of Shewanella sp. (strain ANA-3).